The following is a 312-amino-acid chain: Ribonuclease Z (312 aa).

H62, H64, D66, H67, H144, D215, and H273 together coordinate Zn(2+). The Proton acceptor role is filled by D66.

The protein belongs to the RNase Z family. Homodimer. It depends on Zn(2+) as a cofactor.

It carries out the reaction Endonucleolytic cleavage of RNA, removing extra 3' nucleotides from tRNA precursor, generating 3' termini of tRNAs. A 3'-hydroxy group is left at the tRNA terminus and a 5'-phosphoryl group is left at the trailer molecule.. Its function is as follows. Zinc phosphodiesterase, which displays some tRNA 3'-processing endonuclease activity. Probably involved in tRNA maturation, by removing a 3'-trailer from precursor tRNA. The protein is Ribonuclease Z of Prochlorococcus marinus subsp. pastoris (strain CCMP1986 / NIES-2087 / MED4).